A 369-amino-acid polypeptide reads, in one-letter code: Probable dual-specificity RNA methyltransferase RlmN (369 aa).

The Proton acceptor role is filled by Glu-98. In terms of domain architecture, Radical SAM core spans Ser-106–Asp-341. A disulfide bridge connects residues Cys-113 and Cys-346. [4Fe-4S] cluster contacts are provided by Cys-120, Cys-124, and Cys-127. S-adenosyl-L-methionine contacts are provided by residues Gly-171–Glu-172, Ser-204, Ser-227–His-229, and Asn-303. Cys-346 acts as the S-methylcysteine intermediate in catalysis.

It belongs to the radical SAM superfamily. RlmN family. It depends on [4Fe-4S] cluster as a cofactor.

The protein localises to the cytoplasm. It carries out the reaction adenosine(2503) in 23S rRNA + 2 reduced [2Fe-2S]-[ferredoxin] + 2 S-adenosyl-L-methionine = 2-methyladenosine(2503) in 23S rRNA + 5'-deoxyadenosine + L-methionine + 2 oxidized [2Fe-2S]-[ferredoxin] + S-adenosyl-L-homocysteine. It catalyses the reaction adenosine(37) in tRNA + 2 reduced [2Fe-2S]-[ferredoxin] + 2 S-adenosyl-L-methionine = 2-methyladenosine(37) in tRNA + 5'-deoxyadenosine + L-methionine + 2 oxidized [2Fe-2S]-[ferredoxin] + S-adenosyl-L-homocysteine. Specifically methylates position 2 of adenine 2503 in 23S rRNA and position 2 of adenine 37 in tRNAs. This is Probable dual-specificity RNA methyltransferase RlmN from Chloroherpeton thalassium (strain ATCC 35110 / GB-78).